The chain runs to 98 residues: Protein FAM24A (98 aa).

Positions 1-29 are cleaved as a signal peptide; that stretch reads MFDLRTKVMIGIASTLLIAAIMLITLVFC.

It belongs to the FAM24 family.

The protein resides in the secreted. The protein is Protein FAM24A (Fam24a) of Mus musculus (Mouse).